The sequence spans 637 residues: tRNA-dihydrouridine(47) synthase [NAD(P)(+)]-like (637 aa).

3 disordered regions span residues 1 to 21, 41 to 63, and 85 to 105; these read MAET…ACER, LDGD…EPGA, and ERQV…VKPA. A compositionally biased stretch (basic residues) spans 89 to 104; the sequence is PKRARGQNKSRPHVKP. 2 C3H1-type zinc fingers span residues 107-137 and 145-175; these read YDKD…HDVG and ADLG…HLGP. T260 bears the Phosphothreonine mark. Phosphoserine occurs at positions 263 and 264. Residues 298-300 and Q352 each bind FMN; that span reads PLT. Catalysis depends on C383, which acts as the Proton donor. K403 is covalently cross-linked (Glycyl lysine isopeptide (Lys-Gly) (interchain with G-Cter in SUMO2)). Residues K422, H452, 484–486, and 507–508 contribute to the FMN site; these read NGD and AR.

It belongs to the Dus family. Dus3 subfamily. It depends on FMN as a cofactor.

It catalyses the reaction 5,6-dihydrouridine(47) in tRNA + NAD(+) = uridine(47) in tRNA + NADH + H(+). The enzyme catalyses 5,6-dihydrouridine(47) in tRNA + NADP(+) = uridine(47) in tRNA + NADPH + H(+). The catalysed reaction is a 5,6-dihydrouridine in mRNA + NAD(+) = a uridine in mRNA + NADH + H(+). It carries out the reaction a 5,6-dihydrouridine in mRNA + NADP(+) = a uridine in mRNA + NADPH + H(+). Catalyzes the synthesis of dihydrouridine, a modified base, in various RNAs, such as tRNAs, mRNAs and some long non-coding RNAs (lncRNAs). Mainly modifies the uridine in position 47 (U47) in the D-loop of most cytoplasmic tRNAs. Also able to mediate the formation of dihydrouridine in some mRNAs, thereby regulating their translation. The sequence is that of tRNA-dihydrouridine(47) synthase [NAD(P)(+)]-like from Mus musculus (Mouse).